The sequence spans 23 residues: Phospholipase A2 crotoxin basic chain 3 (23 aa).

The cofactor is Ca(2+). Post-translationally, contains 7 disulfide bonds. In terms of tissue distribution, expressed by the venom gland.

It localises to the secreted. The catalysed reaction is a 1,2-diacyl-sn-glycero-3-phosphocholine + H2O = a 1-acyl-sn-glycero-3-phosphocholine + a fatty acid + H(+). In terms of biological role, snake venom phospholipase A2 (PLA2) that shows presynaptic neurotoxicity. PLA2 catalyzes the calcium-dependent hydrolysis of the 2-acyl groups in 3-sn-phosphoglycerides. The polypeptide is Phospholipase A2 crotoxin basic chain 3 (Crotalus durissus terrificus (South American rattlesnake)).